The sequence spans 496 residues: Cytochrome P450 71D179 (496 aa).

Residues 1–21 traverse the membrane as a helical; Signal-anchor for type II membrane protein segment; it reads MDISISWVVIIVSVLSYLILM. Cys435 is a binding site for heme.

Belongs to the cytochrome P450 family. It depends on heme as a cofactor.

Its subcellular location is the membrane. It functions in the pathway secondary metabolite biosynthesis; terpenoid biosynthesis. Involved in the biosynthesis of phenolic monoterpenes natural products thymol and carvacrol which have a broad range of biological activities acting as antimicrobial compounds, insecticides, antioxidants and pharmaceutical agents. Catalyzes probably the C3-hydroxylation of gamma-terpinene to produce thymol. In Thymus vulgaris (Thyme), this protein is Cytochrome P450 71D179.